Here is a 450-residue protein sequence, read N- to C-terminus: WD repeat-containing protein ATCSA-1 (450 aa).

WD repeat units lie at residues 41 to 81 (PHRG…DYEA), 101 to 141 (GHKY…AVVD), 148 to 185 (VYRTAMSSMAMSHTLIAAGTEDVQVRLCDIASGAFSHT), and 188 to 228 (GHRD…CFRV). Residues 269–298 (LQSKQTGSQSVKGSSSAKASVEKSRQKRIH) form a disordered region. Positions 271 to 287 (SKQTGSQSVKGSSSAKA) are enriched in low complexity. WD repeat units follow at residues 310 to 349 (AHYGAVTGLKATNDGMYLLSAGSDSRIRLWDIESGRNTLV) and 397 to 436 (GHYESVNTCCFNSNDQELYTSGSDRQILVWSPGGTVEDEM).

Interacts with DDB1A. As to expression, expressed in roots, leaves, stems, flowers and siliques.

The protein localises to the nucleus. In terms of biological role, involved in UV-B tolerance and genome integrity. In association with DDB2, is necessary for repair of UV-B-induced DNA lesions. The chain is WD repeat-containing protein ATCSA-1 from Arabidopsis thaliana (Mouse-ear cress).